Consider the following 124-residue polypeptide: Profilin-2 (124 aa).

This sequence belongs to the profilin family. In terms of assembly, occurs in many kinds of cells as a complex with monomeric actin in a 1:1 ratio. Interacts with forH.

It is found in the cytoplasm. The protein resides in the cytoskeleton. Functionally, binds to actin and affects the structure of the cytoskeleton. At high concentrations, profilin prevents the polymerization of actin, whereas it enhances it at low concentrations. By binding to PIP2, it inhibits the formation of IP3 and DG. The sequence is that of Profilin-2 (proB) from Dictyostelium discoideum (Social amoeba).